A 167-amino-acid chain; its full sequence is Calcium-binding protein CML19 (167 aa).

EF-hand domains lie at Gln23–Glu58, Met59–Glu94, Asp96–Asn131, and Phe132–Gly167. Ca(2+)-binding residues include Asp36, Asp38, Ser40, Ser42, Glu47, Asp72, Asn74, Ser76, Glu83, Asp109, Asp111, Asn113, Lys115, Asp120, Asp145, Asp147, Asp149, Glu151, and Glu156.

This sequence belongs to the centrin family. In terms of assembly, interacts with RAD4. Calcium is required for this interaction. Interacts with SAC3B. In terms of tissue distribution, expressed in leaves, roots, and at lower level in stems. Barely detectable in flower buds and flowers.

It localises to the cytoplasm. The protein localises to the nucleus. Its function is as follows. Potential calcium sensor that binds calcium in vitro. Modulates homologous recombination and nucleotide excision repair (NER). Involved in the early response to UV irradiation. In Arabidopsis thaliana (Mouse-ear cress), this protein is Calcium-binding protein CML19.